Consider the following 316-residue polypeptide: MYNYLDFEKPVADLEGKILELKKLSESGEAVDVAEEISRLERRSKDALRDVYRALTPWQKAQVARHPDRPHCMDYVRALFTDFTPLAGDRAYGEDEAVVAGFARFKGQSIAIVGQEKGNDTHSRLKHNFGMARPEGYRKAVRIMDLADRFGIPVVSLVDTAGAYPGIGAEERGQAEAIARSTSKCLSLKVPNISVIIGEGGSGGAIAIATANLVYMLEHSIYSVISPEGAASILWHDSTRAKDAATNMKITAQDLLQLKVIDGIIPEPVGGAHRASDVVIRTTGETIENGFRELAEKVGDFREQRREKFLAIGRSL.

The CoA carboxyltransferase C-terminal domain maps to 40–293 (LERRSKDALR…GETIENGFRE (254 aa)).

The protein belongs to the AccA family. Acetyl-CoA carboxylase is a heterohexamer composed of biotin carboxyl carrier protein (AccB), biotin carboxylase (AccC) and two subunits each of ACCase subunit alpha (AccA) and ACCase subunit beta (AccD).

It localises to the cytoplasm. It catalyses the reaction N(6)-carboxybiotinyl-L-lysyl-[protein] + acetyl-CoA = N(6)-biotinyl-L-lysyl-[protein] + malonyl-CoA. Its pathway is lipid metabolism; malonyl-CoA biosynthesis; malonyl-CoA from acetyl-CoA: step 1/1. Its function is as follows. Component of the acetyl coenzyme A carboxylase (ACC) complex. First, biotin carboxylase catalyzes the carboxylation of biotin on its carrier protein (BCCP) and then the CO(2) group is transferred by the carboxyltransferase to acetyl-CoA to form malonyl-CoA. In Chelativorans sp. (strain BNC1), this protein is Acetyl-coenzyme A carboxylase carboxyl transferase subunit alpha.